We begin with the raw amino-acid sequence, 465 residues long: Probable glucan endo-1,3-beta-glucosidase eglC (465 aa).

A signal peptide spans 1 to 19 (MFTKTQILALALSIASAEA). The active-site Proton donor is the glutamate 128. Residue asparagine 183 is glycosylated (N-linked (GlcNAc...) asparagine). Glutamate 239 functions as the Nucleophile in the catalytic mechanism. A glycan (N-linked (GlcNAc...) asparagine) is linked at asparagine 318. 2 stretches are compositionally biased toward low complexity: residues 320-333 (SSAS…SAQS) and 380-438 (SPSA…ATPA). 2 disordered regions span residues 320 to 356 (SSAS…GHGG) and 380 to 440 (SPSA…PADF). Residue glycine 442 is the site of GPI-anchor amidated glycine attachment. The propeptide at 443–465 (AGSRLSGSIFGAAMLVAALAVAL) is removed in mature form.

It belongs to the glycosyl hydrolase 17 family. In terms of processing, the GPI-anchor is attached to the protein in the endoplasmic reticulum and serves to target the protein to the cell surface. There, the glucosamine-inositol phospholipid moiety is cleaved off and the GPI-modified mannoprotein is covalently attached via its lipidless GPI glycan remnant to the 1,6-beta-glucan of the outer cell wall layer.

It is found in the cell membrane. The protein localises to the secreted. It localises to the cell wall. It catalyses the reaction Hydrolysis of (1-&gt;3)-beta-D-glucosidic linkages in (1-&gt;3)-beta-D-glucans.. Its function is as follows. Glucanases play a role in cell expansion during growth, in cell-cell fusion during mating, and in spore release during sporulation. This enzyme may be involved in beta-glucan degradation and also function biosynthetically as a transglycosylase. This Emericella nidulans (strain FGSC A4 / ATCC 38163 / CBS 112.46 / NRRL 194 / M139) (Aspergillus nidulans) protein is Probable glucan endo-1,3-beta-glucosidase eglC (eglC).